Consider the following 1797-residue polypeptide: Non-reducing polyketide synthase nscA (1797 aa).

The interval 17–256 (SDDLKDLFRR…PLPVYDGLCH (240 aa)) is N-terminal acylcarrier protein transacylase domain (SAT). In terms of domain architecture, Ketosynthase family 3 (KS3) spans 392-825 (SSKLAIVGMA…GGNTTLLLED (434 aa)). Residues C565, H700, and H743 each act as for beta-ketoacyl synthase activity in the active site. The malonyl-CoA:ACP transacylase (MAT) domain stretch occupies residues 931–1251 (FTGQGAYYSG…SLVTLHLAGL (321 aa)). The tract at residues 1318 to 1637 (TSLIHQITAE…RLLMDRFFSP (320 aa)) is product template (PT) domain. The tract at residues 1322 to 1458 (HQITAETIES…ATVRFEDPAA (137 aa)) is N-terminal hotdog fold. The 311-residue stretch at 1322–1632 (HQITAETIES…FRRVPRLLMD (311 aa)) folds into the PKS/mFAS DH domain. Catalysis depends on H1354, which acts as the Proton acceptor; for dehydratase activity. The interval 1482-1632 (VEGKASRLSK…FRRVPRLLMD (151 aa)) is C-terminal hotdog fold. The active-site Proton donor; for dehydratase activity is the D1543. Over residues 1663-1686 (SVPEISAPSPSIVVSDSTANNTLT) the composition is skewed to polar residues. The segment at 1663-1723 (SVPEISAPSP…PESESAEPLG (61 aa)) is disordered. Residues 1698 to 1709 (SSSESSTPKESP) are compositionally biased toward low complexity. Residues 1720-1797 (EPLGNTVSQC…EMTAWIEEYC (78 aa)) form the Carrier domain. The residue at position 1757 (S1757) is an O-(pantetheine 4'-phosphoryl)serine.

The cofactor is pantetheine 4'-phosphate.

It participates in secondary metabolite biosynthesis. In terms of biological role, non-reducing polyketide synthase; part of the gene cluster that mediates the biosynthesis of neosartoricin B, a prenylated anthracenone that probably exhibits T-cell antiproliferative activity, suggestive of a physiological role as an immunosuppressive agent. The non-reducing polyketide synthase nscA probably synthesizes and cyclizes the decaketide backbone. The hydrolase nscB then mediates the product release through hydrolysis followed by spontaneous decarboxylation. The prenyltransferase nscD catalyzes the addition of the dimethylallyl group to the aromatic C5. The FAD-dependent monooxygenase nscC is then responsible for the stereospecific hydroxylation at C2. Neosartoricin B can be converted into two additional compounds neosartoricins C and D. Neosartoricin C is a spirocyclic compound that is cyclized through the attack of C3 hydroxyl on C14, followed by dehydration. On the other hand, neosartoricin D is a further cyclized compound in which attack of C2 on C14 in neosartoricin C results in the formation of the acetal-containing dioxabicyclo-octanone ring. Both of these compounds are novel and possibly represent related metabolites of the gene cluster. The protein is Non-reducing polyketide synthase nscA of Arthroderma gypseum (strain ATCC MYA-4604 / CBS 118893) (Microsporum gypseum).